A 45-amino-acid polypeptide reads, in one-letter code: Turripeptide OL11-like (45 aa).

3 disulfides stabilise this stretch: Cys1-Cys31, Cys5-Cys24, and Cys13-Cys45. One can recognise a Kazal-like domain in the interval 1–45 (CMTICTMEYWPVCGSDGKTYPNKCHLTSTACTSQKDITVLHEGKC).

Belongs to the conopeptide P-like superfamily. Expressed by the venom duct.

Its subcellular location is the secreted. Its function is as follows. Acts as a neurotoxin by inhibiting an ion channel. May also act as a serine protease inhibitor, since it possess the kazal serine protease inhibitor signature. In Lophiotoma albina (Sea snail), this protein is Turripeptide OL11-like.